Reading from the N-terminus, the 111-residue chain is Tubulin beta chain (111 aa).

The disordered stretch occupies residues 82-111; that stretch reads SEYQQYQDATAEDEGEFDEEEAEGEGQEYA. Acidic residues predominate over residues 91 to 111; the sequence is TAEDEGEFDEEEAEGEGQEYA.

It belongs to the tubulin family. Dimer of alpha and beta chains. A typical microtubule is a hollow water-filled tube with an outer diameter of 25 nm and an inner diameter of 15 nM. Alpha-beta heterodimers associate head-to-tail to form protofilaments running lengthwise along the microtubule wall with the beta-tubulin subunit facing the microtubule plus end conferring a structural polarity. Microtubules usually have 13 protofilaments but different protofilament numbers can be found in some organisms and specialized cells. Mg(2+) serves as cofactor.

It is found in the cytoplasm. The protein localises to the cytoskeleton. In terms of biological role, tubulin is the major constituent of microtubules, a cylinder consisting of laterally associated linear protofilaments composed of alpha- and beta-tubulin heterodimers. Microtubules grow by the addition of GTP-tubulin dimers to the microtubule end, where a stabilizing cap forms. Below the cap, tubulin dimers are in GDP-bound state, owing to GTPase activity of alpha-tubulin. The polypeptide is Tubulin beta chain (Lymnaea stagnalis (Great pond snail)).